Here is a 358-residue protein sequence, read N- to C-terminus: Protein-glutamate methylesterase/protein-glutamine glutaminase 1 (358 aa).

The Response regulatory domain maps to 7-124 (SVLLVDDSAV…KNFLIDSAAE (118 aa)). D58 is modified (4-aspartylphosphate). A CheB-type methylesterase domain is found at 170 to 358 (AQTTERIVAI…QEIHQAILHR (189 aa)). Catalysis depends on residues S182, H208, and D304.

The protein belongs to the CheB family. In terms of processing, phosphorylated by CheA. Phosphorylation of the N-terminal regulatory domain activates the methylesterase activity.

It localises to the cytoplasm. The catalysed reaction is [protein]-L-glutamate 5-O-methyl ester + H2O = L-glutamyl-[protein] + methanol + H(+). The enzyme catalyses L-glutaminyl-[protein] + H2O = L-glutamyl-[protein] + NH4(+). Involved in chemotaxis. Part of a chemotaxis signal transduction system that modulates chemotaxis in response to various stimuli. Catalyzes the demethylation of specific methylglutamate residues introduced into the chemoreceptors (methyl-accepting chemotaxis proteins or MCP) by CheR. Also mediates the irreversible deamidation of specific glutamine residues to glutamic acid. The protein is Protein-glutamate methylesterase/protein-glutamine glutaminase 1 of Pseudomonas savastanoi pv. phaseolicola (strain 1448A / Race 6) (Pseudomonas syringae pv. phaseolicola (strain 1448A / Race 6)).